The primary structure comprises 68 residues: Conotoxin G1.9 (68 aa).

The first 21 residues, 1 to 21 (MGMRMMFTVFLLVVLATTVVS), serve as a signal peptide directing secretion. The propeptide occupies 22–44 (FTSRRGPKSRRGEPVPTTVINYG). 2 disulfide bridges follow: C46–C52 and C47–C61.

The protein belongs to the conotoxin A superfamily. As to expression, expressed by the venom duct.

The protein resides in the secreted. In terms of biological role, does not show activity on all the human nAChR subtypes studied. The chain is Conotoxin G1.9 from Conus geographus (Geography cone).